The following is a 971-amino-acid chain: Breast cancer type 2 susceptibility protein homolog (971 aa).

Residues 1-15 show a composition bias toward polar residues; sequence MDQNGASGSHPNRLS. 4 disordered regions span residues 1-30, 130-155, 349-395, and 420-466; these read MDQN…ATVS, SRKR…LSVQ, KLKL…DQPN, and MQCS…SSHQ. Over residues 130 to 139 the composition is skewed to basic residues; it reads SRKRDPKSHK. Residues 349–364 show a composition bias toward basic and acidic residues; sequence KLKLEPSSQKEQKSSK. Composition is skewed to polar residues over residues 375–392, 420–432, and 453–466; these read SKQS…TILD, MQCS…SKNA, and KQTP…SSHQ. BRCA2 repeat units lie at residues 570 to 604, 671 to 705, and 746 to 780; these read AEPE…EFQS, NESQ…QSKA, and SETE…EFQA. The segment at 916–971 is disordered; sequence MERFAPKPSSTSTPLADRDLNRSKDCTKNRQDAEDMSPICMQPKKSRRLGLSRSRY. A compositionally biased stretch (basic and acidic residues) spans 931-948; sequence ADRDLNRSKDCTKNRQDA. Residues 959-971 are compositionally biased toward basic residues; it reads KKSRRLGLSRSRY.

As to quaternary structure, interacts with Rad9. Interacts with spn-A/Rad51. Interacts with cyclin CycG.

It localises to the nucleus. Involved in and required for double-strand break repair by meiotic and mitotic homologous recombination. During meiosis, has a dual role in the repair of meiotic double-stranded breaks and the efficient activation of the meiotic recombination checkpoint. This is Breast cancer type 2 susceptibility protein homolog from Drosophila melanogaster (Fruit fly).